Reading from the N-terminus, the 365-residue chain is Phosphoserine aminotransferase (365 aa).

Residue Arg-40 coordinates L-glutamate. Pyridoxal 5'-phosphate-binding positions include 74-75 (AS), Phe-99, Thr-155, Asp-177, and Gln-200. Lys-201 carries the N6-(pyridoxal phosphate)lysine modification. 241 to 242 (NT) contributes to the pyridoxal 5'-phosphate binding site.

It belongs to the class-V pyridoxal-phosphate-dependent aminotransferase family. SerC subfamily. As to quaternary structure, homodimer. Pyridoxal 5'-phosphate is required as a cofactor.

The protein resides in the cytoplasm. It carries out the reaction O-phospho-L-serine + 2-oxoglutarate = 3-phosphooxypyruvate + L-glutamate. The enzyme catalyses 4-(phosphooxy)-L-threonine + 2-oxoglutarate = (R)-3-hydroxy-2-oxo-4-phosphooxybutanoate + L-glutamate. It participates in amino-acid biosynthesis; L-serine biosynthesis; L-serine from 3-phospho-D-glycerate: step 2/3. In terms of biological role, catalyzes the reversible conversion of 3-phosphohydroxypyruvate to phosphoserine and of 3-hydroxy-2-oxo-4-phosphonooxybutanoate to phosphohydroxythreonine. The protein is Phosphoserine aminotransferase of Lactococcus lactis subsp. lactis (strain IL1403) (Streptococcus lactis).